A 354-amino-acid chain; its full sequence is MEFSNQLFMITGCPEQYHHKSLKTGLNILTKKSFDKYGGFILFEAKNIPPYYFGHYLRMVSLPSDRPDLIVYESKQSCRSNMVILGEIFLLSTQHTFIMLNDFGLDIKSISAQDRGKWYECIAGSNSDAIKGHFLFQKTCKASDEPNIIDVDDSNKKYKPEINHLDESNILKRAELLTTVTQSLSTGDAKMAGVIINKNDILDDILTLIIKSGNVSAFKTLINIIGLSNDQIFKIIESSFSHNQTKIYEFLESRYPQLYLESSIINGRTDIVDNLVKKGSNPIVVLHKAAECAQFDIIWNLSENSLINQNDIDIAMTIVKQRIHDILFYSDNPDVEKEQDILELLENIKLMRDF.

ANK repeat units lie at residues 201–230, 253–284, and 286–314; these read ILDDILTLIIKSGNVSAFKTLINIIGLSND, SRYPQLYLESSIINGRTDIVDNLVKKGSNPIV, and LHKAAECAQFDIIWNLSENSLINQNDIDI.

This Acanthamoeba polyphaga (Amoeba) protein is Putative ankyrin repeat protein L284.